The sequence spans 732 residues: Polyribonucleotide nucleotidyltransferase (732 aa).

Mg(2+)-binding residues include aspartate 483 and aspartate 489. Residues 550–609 (PRIVTVQIPVDKIGELIGPKGKNIRGIQDETGAELSVEDDGTVTIAAVGGDSMERAKQMV) enclose the KH domain. Residues 619 to 687 (GETYEGTVKT…ERGRLRLSMK (69 aa)) form the S1 motif domain. Positions 684–732 (LSMKALLPKPEGMPDEPPQSERPRRDDGERSGGDRGGRGGRNGGGRDRR) are disordered. The span at 702 to 720 (QSERPRRDDGERSGGDRGG) shows a compositional bias: basic and acidic residues.

Belongs to the polyribonucleotide nucleotidyltransferase family. The cofactor is Mg(2+).

It is found in the cytoplasm. The catalysed reaction is RNA(n+1) + phosphate = RNA(n) + a ribonucleoside 5'-diphosphate. Its function is as follows. Involved in mRNA degradation. Catalyzes the phosphorolysis of single-stranded polyribonucleotides processively in the 3'- to 5'-direction. This is Polyribonucleotide nucleotidyltransferase from Gemmatimonas aurantiaca (strain DSM 14586 / JCM 11422 / NBRC 100505 / T-27).